The primary structure comprises 354 residues: Histidinol-phosphate aminotransferase (354 aa).

Lysine 210 bears the N6-(pyridoxal phosphate)lysine mark.

Belongs to the class-II pyridoxal-phosphate-dependent aminotransferase family. Histidinol-phosphate aminotransferase subfamily. Homodimer. Requires pyridoxal 5'-phosphate as cofactor.

It carries out the reaction L-histidinol phosphate + 2-oxoglutarate = 3-(imidazol-4-yl)-2-oxopropyl phosphate + L-glutamate. The protein operates within amino-acid biosynthesis; L-histidine biosynthesis; L-histidine from 5-phospho-alpha-D-ribose 1-diphosphate: step 7/9. The protein is Histidinol-phosphate aminotransferase of Clostridium botulinum (strain Kyoto / Type A2).